Consider the following 387-residue polypeptide: Galactokinase (387 aa).

33–36 (EHID) provides a ligand contact to substrate. ATP contacts are provided by residues Ser67 and 124–130 (GAGLSSS). Mg(2+) contacts are provided by Ser130 and Glu162. The active-site Proton acceptor is Asp174. Tyr224 provides a ligand contact to substrate.

This sequence belongs to the GHMP kinase family. GalK subfamily.

Its subcellular location is the cytoplasm. The catalysed reaction is alpha-D-galactose + ATP = alpha-D-galactose 1-phosphate + ADP + H(+). It participates in carbohydrate metabolism; galactose metabolism. Its function is as follows. Catalyzes the transfer of the gamma-phosphate of ATP to D-galactose to form alpha-D-galactose-1-phosphate (Gal-1-P). The protein is Galactokinase of Clostridium perfringens (strain SM101 / Type A).